A 374-amino-acid polypeptide reads, in one-letter code: 4-galactosyl-N-acetylglucosaminide 3-alpha-L-fucosyltransferase FUT5 (374 aa).

The Cytoplasmic segment spans residues 1-15 (MDPLGPAKPQWLWRR). Residues 16 to 34 (CLAGLLFQLLVAVCFFSYL) form a helical; Signal-anchor for type II membrane protein membrane-spanning segment. The Lumenal portion of the chain corresponds to 35–374 (RVSQDHATGS…TVRSIAAWFT (340 aa)). 4 N-linked (GlcNAc...) asparagine glycosylation sites follow: N60, N105, N167, and N198.

This sequence belongs to the glycosyltransferase 10 family.

Its subcellular location is the golgi apparatus. The protein localises to the golgi stack membrane. The catalysed reaction is a beta-D-galactosyl-(1-&gt;3)-N-acetyl-beta-D-glucosaminyl derivative + GDP-beta-L-fucose = a beta-D-galactosyl-(1-&gt;3)-[alpha-L-fucosyl-(1-&gt;4)]-N-acetyl-beta-D-glucosaminyl derivative + GDP + H(+). It catalyses the reaction an N-acetyl-alpha-neuraminyl-(2-&gt;3)-beta-D-galactosyl-(1-&gt;4)-N-acetyl-beta-D-glucosaminyl derivative + GDP-beta-L-fucose = an alpha-Neu5Ac-(2-&gt;3)-beta-D-Gal-(1-&gt;4)-[alpha-L-Fuc-(1-&gt;3)]-beta-D-GlcNAc derivative + GDP + H(+). It carries out the reaction an alpha-Neu5Ac-(2-&gt;3)-beta-D-Gal-(1-&gt;4)-beta-D-GlcNAc-(1-&gt;3)-beta-D-Gal-(1-&gt;4)-[alpha-L-Fuc-(1-&gt;3)]-beta-D-GlcNAc derivative + GDP-beta-L-fucose = an alpha-Neu5Ac-(2-&gt;3)-beta-D-Gal-(1-&gt;4)-[alpha-L-Fuc-(1-&gt;3)]-beta-D-GlcNAc-(1-&gt;3)-beta-D-Gal-(1-&gt;4)-[alpha-L-Fuc-(1-&gt;3)]-beta-D-GlcNAc derivative + GDP + H(+). The enzyme catalyses a beta-D-galactosyl-(1-&gt;4)-N-acetyl-beta-D-glucosaminyl derivative + GDP-beta-L-fucose = a beta-D-galactosyl-(1-&gt;4)-[alpha-L-fucosyl-(1-&gt;3)]-N-acetyl-beta-D-glucosaminyl derivative + GDP + H(+). The catalysed reaction is a neolactoside nLc4Cer + GDP-beta-L-fucose = a neolactoside III(3)-alpha-Fuc-nLc4Cer + GDP + H(+). It catalyses the reaction a neolactoside nLc6Cer + GDP-beta-L-fucose = beta-D-galactosyl-(1-&gt;4)-N-acetyl-beta-D-glucosaminyl-(1-&gt;3)-beta-D-galactosyl-(1-&gt;4)-[alpha-L-fucosyl-(1-&gt;3)]-N-acetyl-beta-D-glucosaminyl-(1-&gt;3)-beta-D-galactosyl-(1-&gt;4)-beta-D-glucosyl-(1&lt;-&gt;1')-ceramide + GDP + H(+). It carries out the reaction a neolactoside nLc6Cer(d18:1(4E)) + GDP-beta-L-fucose = a neolactoside III(3)-alpha-Fuc-nLc6Cer(d18:1(4E)) + GDP + H(+). The enzyme catalyses a neolactoside nLc4Cer(d18:1(4E)) + GDP-beta-L-fucose = a neolactoside III(3)-alpha-Fuc-nLc4Cer(d18:1(4E)) + GDP + H(+). The catalysed reaction is a neolactoside VI(3)-alpha-NeuNAc-nLc6Cer + GDP-beta-L-fucose = a neolactoside VI(3)-alpha-NeuAc,III(3)-alphaFuc-nLc6Cer + GDP + H(+). It catalyses the reaction beta-D-galactosyl-(1-&gt;4)-N-acetyl-D-glucosamine + GDP-beta-L-fucose = beta-D-galactosyl-(1-&gt;4)-[alpha-L-fucosyl-(1-&gt;3)]-N-acetyl-D-glucosamine + GDP + H(+). It carries out the reaction N-acetyl-alpha-neuraminosyl-(2-&gt;3)-beta-D-galactosyl-(1-&gt;4)-N-acetyl-beta-D-glucosamine + GDP-beta-L-fucose = N-acetyl-alpha-neuraminosyl-(2-&gt;3)-beta-D-galactosyl-(1-&gt;4)-[alpha-L-fucosyl-(1-&gt;3)]-N-acetyl-beta-D-glucosamine + GDP + H(+). The enzyme catalyses alpha-L-Fuc-(1-&gt;2)-beta-D-Gal-(1-&gt;4)-D-GlcNAc + GDP-beta-L-fucose = alpha-L-Fuc-(1-&gt;2)-beta-D-Gal-(1-&gt;4)-[alpha-L-Fuc-(1-&gt;3)]-D-GlcNAc + GDP + H(+). The catalysed reaction is an alpha-Neu5Ac-(2-&gt;3)-beta-D-Gal-(1-&gt;3)-D-GlcNAc derivative + GDP-beta-L-fucose = an alpha-Neu5Ac-(2-&gt;3)-beta-D-Gal-(1-&gt;3)-[alpha-L-Fuc-(1-&gt;4)]-beta-D-GlcNAc derivative + GDP + H(+). Its pathway is protein modification; protein glycosylation. Functionally, catalyzes preferentially the transfer of L-fucose, from a guanosine diphosphate-beta-L-fucose, to the N-acetyl-beta-D-glucosamine (GlcNAc) of an N-acetyllactosamine unit (type 2 chain) of an oligosaccharide, or a glycoprotein- and a glycolipid-linked N-acetyllactosamine unit via an alpha (1,3) linkage and participates in the surface expression of VIM-2, Lewis X/SSEA-1 and sialyl Lewis X antigens. Preferentially transfers fucose to the GlcNAc of an internal N-acetyllactosamine unit of a poly-N-acetyllactosamine chain acceptor substrate. Also catalyzes to a lesser extend the transfer of L-fucose to the GlcNAc of a type 1 (beta-D-galactosyl-(1-&gt;3)-N-acetyl-beta-D-glucosaminyl) or H-type 1 (alpha-L-Fuc-(1-&gt;2)-beta-D-Gal-(1-&gt;3)-D-GlcNAc) chain oligosaccharide via an alpha (1,4) linkage. Preferentially catalyzes sialylated type 2 oligosaccharide acceptors over neutral type 2 or H type 2 (alpha-L-Fuc-(1-&gt;2)-beta-D-Gal-(1-&gt;4)-D-GlcNAc) oligosaccharide acceptors. Lactose-based structures are also acceptor substrates. The chain is 4-galactosyl-N-acetylglucosaminide 3-alpha-L-fucosyltransferase FUT5 from Gorilla gorilla gorilla (Western lowland gorilla).